Reading from the N-terminus, the 416-residue chain is Catalase-peroxidase 2 (416 aa).

Positions 1–20 (MLLPLIVFLLSVLIHHRIYS) are cleaved as a signal peptide.

This sequence belongs to the peroxidase family. Peroxidase/catalase subfamily. As to quaternary structure, homodimer or homotetramer. Heme b serves as cofactor. In terms of processing, formation of the three residue Trp-Tyr-Met cross-link is important for the catalase, but not the peroxidase activity of the enzyme.

It carries out the reaction H2O2 + AH2 = A + 2 H2O. It catalyses the reaction 2 H2O2 = O2 + 2 H2O. Bifunctional enzyme with both catalase and broad-spectrum peroxidase activity. The chain is Catalase-peroxidase 2 (katG2) from Alkaliphilus metalliredigens (strain QYMF).